Consider the following 87-residue polypeptide: Small ribosomal subunit protein uS15 (87 aa).

It belongs to the universal ribosomal protein uS15 family. As to quaternary structure, part of the 30S ribosomal subunit. Forms a bridge to the 50S subunit in the 70S ribosome, contacting the 23S rRNA.

Functionally, one of the primary rRNA binding proteins, it binds directly to 16S rRNA where it helps nucleate assembly of the platform of the 30S subunit by binding and bridging several RNA helices of the 16S rRNA. Its function is as follows. Forms an intersubunit bridge (bridge B4) with the 23S rRNA of the 50S subunit in the ribosome. This chain is Small ribosomal subunit protein uS15, found in Alkaliphilus metalliredigens (strain QYMF).